The primary structure comprises 327 residues: Tagatose 1,6-diphosphate aldolase 2 (327 aa).

It belongs to the aldolase LacD family.

The enzyme catalyses D-tagatofuranose 1,6-bisphosphate = D-glyceraldehyde 3-phosphate + dihydroxyacetone phosphate. The protein operates within carbohydrate metabolism; D-tagatose 6-phosphate degradation; D-glyceraldehyde 3-phosphate and glycerone phosphate from D-tagatose 6-phosphate: step 2/2. In Streptococcus pyogenes serotype M1, this protein is Tagatose 1,6-diphosphate aldolase 2 (lacD2).